The sequence spans 117 residues: MTFEMLYSKIHRATITDANLNYIGSITIDEDLAKLAKLREGMKVEIVDVNNGERFSTYVILGKKRGEICVNGAAARKVAIGDVVIILAYASMNEDEINAHKPSIVLVDEKNEILEKG.

Serine 25 acts as the Schiff-base intermediate with substrate; via pyruvic acid in catalysis. Serine 25 bears the Pyruvic acid (Ser) mark. A substrate-binding site is contributed by threonine 57. The active-site Proton donor is the tyrosine 58. 72-74 (GAA) serves as a coordination point for substrate.

It belongs to the PanD family. As to quaternary structure, heterooctamer of four alpha and four beta subunits. Pyruvate serves as cofactor. In terms of processing, is synthesized initially as an inactive proenzyme, which is activated by self-cleavage at a specific serine bond to produce a beta-subunit with a hydroxyl group at its C-terminus and an alpha-subunit with a pyruvoyl group at its N-terminus.

It localises to the cytoplasm. The catalysed reaction is L-aspartate + H(+) = beta-alanine + CO2. It participates in cofactor biosynthesis; (R)-pantothenate biosynthesis; beta-alanine from L-aspartate: step 1/1. Catalyzes the pyruvoyl-dependent decarboxylation of aspartate to produce beta-alanine. The sequence is that of Aspartate 1-decarboxylase from Helicobacter pylori (strain ATCC 700392 / 26695) (Campylobacter pylori).